Here is an 820-residue protein sequence, read N- to C-terminus: MEQARYSNQQSVNPQQKGFGGPGLQDLPKQDPMQNTMEWQHHGYGMDSGFQSSATSHPPSVSSKSRHEDGGEEAQAQGMFEWDAGYGQAYTQEQVDEMNQQLTQTRSQRVRAAMFPETLEEGVQIPSTQFDPAHPTAVQRLSEPSQMLKHAVVNLINYQDDADLATRAIPELTKLLNDDDLVVVNQAAMMVHQLSKKEASRHAIMNSPQMVAALVRAMSNSNDAETTRCAAGTLHNLSHHRAGLLQIFKSGGIPALIKLLSSPVESVLFYAITTLHNLLLHQEGSKMAVRLAGGLQKMVALLSRNNPKFLAITTDCLQILAYGNQESKLIILASGGPAALVHIMRTYDYEKLLWTTSRVLKVLSVCHNNKPAIVEAGGMSALGLHLGHHSNRLVQNCLWTLRNLSDCHRGTDDIEPLLQMLVQLLASNDINVVTCACGILSNLTCNNSRNKMIVSQMAGVEALVQTLMKAGDREEITEPAVCALRHVTSRHPGAEMGQNTVRLNYGIPVIVKLLHPPSRWPLIKATVGLIRNLALCSANHAPLREQGALHRLVQLLMRAHQDTQRRSSMGSTGSQGGNYADGVRMEDIVEGTTGALHILARDSHNRALIQGLNCIPLFVQLLYNNIENIQRVAAGVLSELSLEKQGAEMIEQEGATAPLTELLHSRNEGVATYAAAVLYRMSDDKPQDYKKRISVELGNSLFRGDSVPWGDPLDMPSDNQILPPSSMGGHPPDPGYPQPGSVHSLHSNHGEYRQPPPPMQGYHDGTGPIEPMMQDLDLGGGGDFGMDPGLPDMGPPASDLNLDSIPPADNTGLAFFDTDL.

Over residues 1-16 the composition is skewed to polar residues; it reads MEQARYSNQQSVNPQQ. Residues 1–74 are disordered; it reads MEQARYSNQQ…SRHEDGGEEA (74 aa). Residues 52-63 are compositionally biased toward low complexity; that stretch reads SSATSHPPSVSS. ARM repeat units lie at residues 157–196, 199–239, 241–280, 283–322, 367–405, 406–445, 448–489, 495–535, 603–642, and 644–683; these read NYQDDADLATRAIPELTKLLNDDDLVVVNQAAMMVHQLSK, ASRH…NLSH, RAGLLQIFKSGGIPALIKLLSSPVESVLFYAITTLHNLLL, EGSKMAVRLAGGLQKMVALLSRNNPKFLAITTDCLQILAY, HNNKPAIVEAGGMSALGLHLGHHSNRLVQNCLWTLRNLS, DCHRGTDDIEPLLQMLVQLLASNDINVVTCACGILSNLTC, SRNK…HVTS, EMGQ…NLAL, SHNRALIQGLNCIPLFVQLLYNNIENIQRVAAGVLSELSL, and KQGAEMIEQEGATAPLTELLHSRNEGVATYAAAVLYRMSD. The segment at 708–811 is disordered; it reads PWGDPLDMPS…LDSIPPADNT (104 aa). The segment covering 785–796 has biased composition (low complexity); sequence GMDPGLPDMGPP.

Belongs to the beta-catenin family.

The protein localises to the cytoplasm. Its subcellular location is the cytoskeleton. Binds to the cytoplasmic domain of the cell-cell adhesion molecule E-cadherin, and perhaps to other (membrane) proteins. The association of catenins to cadherins produces a complex which is linked to the actin filament network, and which seems to be of primary importance for cadherins cell-adhesion properties. This chain is Catenin beta, found in Tripneustes gratilla (Hawaian sea urchin).